The following is a 502-amino-acid chain: Glycerol kinase (502 aa).

T14 lines the ADP pocket. ATP-binding residues include T14, T15, and S16. T14 is a sn-glycerol 3-phosphate binding site. R18 is a binding site for ADP. Sn-glycerol 3-phosphate-binding residues include R84, E85, Y136, and D246. Glycerol contacts are provided by R84, E85, Y136, D246, and Q247. Positions 268 and 311 each coordinate ADP. ATP-binding residues include T268, G311, Q315, and G412. Residues G412 and N416 each coordinate ADP.

It belongs to the FGGY kinase family. As to quaternary structure, homotetramer and homodimer (in equilibrium). Heterodimer with EIIA-Glc. Binds 1 zinc ion per glycerol kinase EIIA-Glc dimer. The zinc ion is important for dimerization.

It carries out the reaction glycerol + ATP = sn-glycerol 3-phosphate + ADP + H(+). It participates in polyol metabolism; glycerol degradation via glycerol kinase pathway; sn-glycerol 3-phosphate from glycerol: step 1/1. Activity of this regulatory enzyme is affected by several metabolites. Allosterically and non-competitively inhibited by fructose 1,6-bisphosphate (FBP) and unphosphorylated phosphocarrier protein EIIA-Glc (III-Glc), an integral component of the bacterial phosphotransferase (PTS) system. Key enzyme in the regulation of glycerol uptake and metabolism. Catalyzes the phosphorylation of glycerol to yield sn-glycerol 3-phosphate. This chain is Glycerol kinase, found in Escherichia coli O7:K1 (strain IAI39 / ExPEC).